The following is a 307-amino-acid chain: UDP-N-acetylenolpyruvoylglucosamine reductase (307 aa).

The FAD-binding PCMH-type domain occupies threonine 33–glycine 197. The active site involves arginine 176. The active-site Proton donor is serine 226. The active site involves glutamate 296.

This sequence belongs to the MurB family. Requires FAD as cofactor.

It localises to the cytoplasm. It catalyses the reaction UDP-N-acetyl-alpha-D-muramate + NADP(+) = UDP-N-acetyl-3-O-(1-carboxyvinyl)-alpha-D-glucosamine + NADPH + H(+). The protein operates within cell wall biogenesis; peptidoglycan biosynthesis. Its function is as follows. Cell wall formation. In Staphylococcus aureus (strain NCTC 8325 / PS 47), this protein is UDP-N-acetylenolpyruvoylglucosamine reductase.